The chain runs to 443 residues: Tol-Pal system protein TolB (443 aa).

Residues 1–18 (MRNIVYFILTLFSLTSYA) form the signal peptide.

It belongs to the TolB family. The Tol-Pal system is composed of five core proteins: the inner membrane proteins TolA, TolQ and TolR, the periplasmic protein TolB and the outer membrane protein Pal. They form a network linking the inner and outer membranes and the peptidoglycan layer.

Its subcellular location is the periplasm. Functionally, part of the Tol-Pal system, which plays a role in outer membrane invagination during cell division and is important for maintaining outer membrane integrity. The protein is Tol-Pal system protein TolB of Rickettsia prowazekii (strain Madrid E).